A 494-amino-acid polypeptide reads, in one-letter code: Putative glucuronosyltransferase PGSIP7 (494 aa).

Residues 4-24 traverse the membrane as a helical segment; sequence QRTLMFSCWVLSLLIIKTTAY. D161 and D163 together coordinate Mn(2+). 5 helical membrane passes run 316–336, 362–382, 389–409, 410–430, and 444–464; these read YSAE…IILV, AFKF…FFII, LIGW…PINA, FLLP…TLLV, and LSVF…FVKI.

Belongs to the glycosyltransferase 8 family. Glycogenin subfamily. The cofactor is Mn(2+).

It localises to the membrane. The polypeptide is Putative glucuronosyltransferase PGSIP7 (PGSIP7) (Arabidopsis thaliana (Mouse-ear cress)).